A 136-amino-acid polypeptide reads, in one-letter code: MGRVRTKTVKRASKALIERYYPKLTLDFQTNKRLCDEIATIQSKRLRNKIAGYTTHLMKRIQKGPVRGISFKLQEEERERKDQYVPEVSALDLSRSNGVLNVDNQTSDLVKSLGLKLPLSVINVSAQRDRRYRKRN.

It belongs to the eukaryotic ribosomal protein eS17 family. As to quaternary structure, component of the small ribosomal subunit (SSU). Mature yeast ribosomes consist of a small (40S) and a large (60S) subunit. The 40S small subunit contains 1 molecule of ribosomal RNA (18S rRNA) and 33 different proteins (encoded by 57 genes). The large 60S subunit contains 3 rRNA molecules (25S, 5.8S and 5S rRNA) and 46 different proteins (encoded by 81 genes).

The protein resides in the cytoplasm. Its function is as follows. Component of the ribosome, a large ribonucleoprotein complex responsible for the synthesis of proteins in the cell. The small ribosomal subunit (SSU) binds messenger RNAs (mRNAs) and translates the encoded message by selecting cognate aminoacyl-transfer RNA (tRNA) molecules. The large subunit (LSU) contains the ribosomal catalytic site termed the peptidyl transferase center (PTC), which catalyzes the formation of peptide bonds, thereby polymerizing the amino acids delivered by tRNAs into a polypeptide chain. The nascent polypeptides leave the ribosome through a tunnel in the LSU and interact with protein factors that function in enzymatic processing, targeting, and the membrane insertion of nascent chains at the exit of the ribosomal tunnel. The sequence is that of Small ribosomal subunit protein eS17B from Saccharomyces cerevisiae (strain ATCC 204508 / S288c) (Baker's yeast).